We begin with the raw amino-acid sequence, 86 residues long: ATP synthase epsilon chain (86 aa).

This sequence belongs to the ATPase epsilon chain family. As to quaternary structure, F-type ATPases have 2 components, CF(1) - the catalytic core - and CF(0) - the membrane proton channel. CF(1) has five subunits: alpha(3), beta(3), gamma(1), delta(1), epsilon(1). CF(0) has three main subunits: a, b and c.

The protein localises to the cell inner membrane. In terms of biological role, produces ATP from ADP in the presence of a proton gradient across the membrane. This Caulobacter vibrioides (strain ATCC 19089 / CIP 103742 / CB 15) (Caulobacter crescentus) protein is ATP synthase epsilon chain (atpC).